The chain runs to 313 residues: Ribonuclease HIII (313 aa).

The RNase H type-2 domain occupies 98-313 (YNCIGSDEAG…REKALKLIKK (216 aa)). A divalent metal cation is bound by residues D104, E105, and D208.

Belongs to the RNase HII family. RnhC subfamily. Mn(2+) is required as a cofactor. The cofactor is Mg(2+).

The protein resides in the cytoplasm. The catalysed reaction is Endonucleolytic cleavage to 5'-phosphomonoester.. Functionally, endonuclease that specifically degrades the RNA of RNA-DNA hybrids. The protein is Ribonuclease HIII of Macrococcus caseolyticus (strain JCSC5402) (Macrococcoides caseolyticum).